A 564-amino-acid chain; its full sequence is Eukaryotic translation initiation factor 3 subunit L (564 aa).

Ser-2 is modified (N-acetylserine). Ser-21 bears the Phosphoserine mark. The 207-residue stretch at 331–537 (DAIRVFANIL…IHIADTKVAR (207 aa)) folds into the PCI domain. An N6-acetyllysine mark is found at Lys-465 and Lys-549.

Component of the eukaryotic translation initiation factor 3 (eIF-3) complex, which is composed of 13 subunits: EIF3A, EIF3B, EIF3C, EIF3D, EIF3E, EIF3F, EIF3G, EIF3H, EIF3I, EIF3J, EIF3K, EIF3L and EIF3M. The eIF-3 complex appears to include 3 stable modules: module A is composed of EIF3A, EIF3B, EIF3G and EIF3I; module B is composed of EIF3F, EIF3H, and EIF3M; and module C is composed of EIF3C, EIF3D, EIF3E, EIF3K and EIF3L. EIF3C of module C binds EIF3B of module A and EIF3H of module B, thereby linking the three modules. EIF3J is a labile subunit that binds to the eIF-3 complex via EIF3B. The eIF-3 complex interacts with RPS6KB1 under conditions of nutrient depletion. Mitogenic stimulation leads to binding and activation of a complex composed of MTOR and RPTOR, leading to phosphorylation and release of RPS6KB1 and binding of EIF4B to eIF-3. Interacts with RRN3.

The protein resides in the cytoplasm. Component of the eukaryotic translation initiation factor 3 (eIF-3) complex, which is required for several steps in the initiation of protein synthesis. The eIF-3 complex associates with the 40S ribosome and facilitates the recruitment of eIF-1, eIF-1A, eIF-2:GTP:methionyl-tRNAi and eIF-5 to form the 43S pre-initiation complex (43S PIC). The eIF-3 complex stimulates mRNA recruitment to the 43S PIC and scanning of the mRNA for AUG recognition. The eIF-3 complex is also required for disassembly and recycling of post-termination ribosomal complexes and subsequently prevents premature joining of the 40S and 60S ribosomal subunits prior to initiation. The eIF-3 complex specifically targets and initiates translation of a subset of mRNAs involved in cell proliferation, including cell cycling, differentiation and apoptosis, and uses different modes of RNA stem-loop binding to exert either translational activation or repression. Its function is as follows. (Microbial infection) In case of FCV infection, plays a role in the ribosomal termination-reinitiation event leading to the translation of VP2. The sequence is that of Eukaryotic translation initiation factor 3 subunit L from Homo sapiens (Human).